The chain runs to 402 residues: Proline-rich protein 25 (402 aa).

Disordered regions lie at residues 1–29, 109–255, and 337–371; these read MART…AAAH, TVPG…MVGS, and EAAQ…CPGR. Residues 345–355 show a composition bias toward low complexity; that stretch reads RRTAPPRRTAS. The segment covering 356-367 has biased composition (pro residues); the sequence is PEPPAPGAPLPA.

The protein is Proline-rich protein 25 (PRR25) of Homo sapiens (Human).